The primary structure comprises 110 residues: Evasin P1166 (110 aa).

The first 24 residues, 1 to 24 (MEVKIFTLLQIALFIALGIHLVVA), serve as a signal peptide directing secretion. Cystine bridges form between Cys-45–Cys-67, Cys-49–Cys-69, and Cys-60–Cys-80. Asn-48 carries an N-linked (GlcNAc...) asparagine glycan. Residues 89–110 (SEYPNPKSSEIDAAAPLPRETH) form a disordered region.

It is found in the secreted. Its function is as follows. Salivary chemokine-binding protein which binds to host chemokines CXCL1, CXCL2 and CXCL8. The sequence is that of Evasin P1166 from Ixodes ricinus (Common tick).